A 364-amino-acid chain; its full sequence is MVFADYKQRVENGDLAVAWIGRNKLIPLHIEAEKTFHNQYGAFPHSEMIGKRYGEQIASTAKQGFIYLLQPTPELWTLALPHRTQIVYTPDIALIHQKLRITYGTRVIEAGTGSASMSHAISRTVGPLGRLFTFEYHATRYQTALQEFREHEMLIDVGGNTHLTHRDVCKDGFLDTEVKVDAIFLDLPAPWEAIPHLSNHVNHDKSTRICCFSPCIEQIQHSAEALRELGWCDIEMIEVDYKQWAARKSRIVHIDEAIDRLKEVKRRRIEGFERRKMRREQNLSSDAKVEDQDNDSMLGENKSSVSTETALKPVTNKRIREGDGNYEWTDVARVDSNLKSHTSYLLFAVHLPSQLDKQNQETGP.

Residues 114–116 (SAS), Glu-135, Arg-140, 167–168 (DV), and Asp-186 contribute to the S-adenosyl-L-methionine site. The tract at residues 280–309 (EQNLSSDAKVEDQDNDSMLGENKSSVSTET) is disordered.

The protein belongs to the class I-like SAM-binding methyltransferase superfamily. TRM61 family. As to quaternary structure, heterotetramer; composed of two copies of TRM6 and two copies of TRM61.

The protein resides in the nucleus. The enzyme catalyses adenosine(58) in tRNA + S-adenosyl-L-methionine = N(1)-methyladenosine(58) in tRNA + S-adenosyl-L-homocysteine + H(+). Its function is as follows. Catalytic subunit of tRNA (adenine-N(1)-)-methyltransferase, which catalyzes the formation of N(1)-methyladenine at position 58 (m1A58) in initiator methionyl-tRNA. The protein is tRNA (adenine(58)-N(1))-methyltransferase catalytic subunit trm61 (cpd1) of Schizosaccharomyces pombe (strain 972 / ATCC 24843) (Fission yeast).